Consider the following 241-residue polypeptide: MEKAVHSSTTSGPAVPGETTKTGTSIIDTAASAVQSFAPVNQIHQHLCAFHFYADDMARQVEAHHFCSHVNEEMRQCLIYDGPDANARLIGLEYIVSEKLFMTLPDEEKKLWHSHEWEVKGGFLFMPGVPGAIQRKDLDKVAKTYGKVFHFWQVDLGHELPIGLPNVMMAVTRDGQLFHEMIQEAEKRFGVSVEGERDSRAYMSGPELGIHPLANGGGKGMKLELREVDIKPVESVGSVFV.

Residues 1-12 show a composition bias toward polar residues; it reads MEKAVHSSTTSG. Positions 1–22 are disordered; that stretch reads MEKAVHSSTTSGPAVPGETTKT.

It belongs to the OBAP family.

The chain is Oil body-associated protein 1B from Arabidopsis thaliana (Mouse-ear cress).